Here is a 132-residue protein sequence, read N- to C-terminus: Keratin, high-sulfur matrix protein, IIIA3 (132 aa).

Its function is as follows. The keratin products of mammalian epidermal derivatives such as wool and hair consist of microfibrils embedded in a rigid matrix of other proteins. The matrix proteins include the high-sulfur and high-tyrosine keratins, having molecular weights of 6-20 kDa, whereas the microfibrils contain the larger, low-sulfur keratins (40-56 kDa). This Capra hircus (Goat) protein is Keratin, high-sulfur matrix protein, IIIA3.